We begin with the raw amino-acid sequence, 89 residues long: Small ribosomal subunit protein uS15 (89 aa).

Belongs to the universal ribosomal protein uS15 family. In terms of assembly, part of the 30S ribosomal subunit. Forms a bridge to the 50S subunit in the 70S ribosome, contacting the 23S rRNA.

Functionally, one of the primary rRNA binding proteins, it binds directly to 16S rRNA where it helps nucleate assembly of the platform of the 30S subunit by binding and bridging several RNA helices of the 16S rRNA. In terms of biological role, forms an intersubunit bridge (bridge B4) with the 23S rRNA of the 50S subunit in the ribosome. The protein is Small ribosomal subunit protein uS15 of Zymomonas mobilis subsp. mobilis (strain ATCC 31821 / ZM4 / CP4).